The sequence spans 505 residues: AMP phosphorylase (505 aa).

Residues Gly-169, 195 to 200 (SRAITG), and Thr-204 contribute to the AMP site. The active-site Proton donor is Asp-257. AMP contacts are provided by Ser-265 and Lys-289.

The protein belongs to the thymidine/pyrimidine-nucleoside phosphorylase family. Type 2 subfamily.

The enzyme catalyses AMP + phosphate = alpha-D-ribose 1,5-bisphosphate + adenine. The catalysed reaction is CMP + phosphate = cytosine + alpha-D-ribose 1,5-bisphosphate. It catalyses the reaction UMP + phosphate = alpha-D-ribose 1,5-bisphosphate + uracil. Functionally, catalyzes the conversion of AMP and phosphate to adenine and ribose 1,5-bisphosphate (R15P). Exhibits phosphorylase activity toward CMP and UMP in addition to AMP. Functions in an archaeal AMP degradation pathway, together with R15P isomerase and RubisCO. The protein is AMP phosphorylase of Methanocorpusculum labreanum (strain ATCC 43576 / DSM 4855 / Z).